The chain runs to 203 residues: Alpha-amylase/subtilisin inhibitor (203 aa).

Positions 1–12 (MGSRRAGSSSSP) are enriched in polar residues. A signal peptide spans 1-22 (MGSRRAGSSSSPLFWPAPPSRA). A disordered region spans residues 1–34 (MGSRRAGSSSSPLFWPAPPSRAADPPPVHDTDGH). Residues 15-26 (WPAPPSRAADPP) are compositionally biased toward pro residues. 2 disulfides stabilise this stretch: C65/C112 and C166/C170.

This sequence belongs to the protease inhibitor I3 (leguminous Kunitz-type inhibitor) family.

Functionally, this protein inhibits independently subtilisin and alpha-amylase. In Hordeum vulgare (Barley), this protein is Alpha-amylase/subtilisin inhibitor.